The chain runs to 410 residues: G-protein coupled receptor family C group 5 member B (410 aa).

The N-terminal stretch at 1-28 is a signal peptide; sequence MFLVLERKMRTHQVFPLPLLLVIASVAS. Residues 29–56 are Extracellular-facing; it reads ENASTSRGCGLDLLPQYVSLCDLDAIWG. Asparagine 30 is a glycosylation site (N-linked (GlcNAc...) asparagine). Residues 57-77 traverse the membrane as a helical segment; sequence IVVEAVAGAGALITLLLMLIL. At 78 to 94 the chain is on the cytoplasmic side; it reads LVRLPFIKDKERKRPVC. A helical transmembrane segment spans residues 95–115; sequence LHFLFLLGTLGLFGLTFAFII. Residues 116–126 are Extracellular-facing; the sequence is QMDETICSIRR. Residues 127–147 form a helical membrane-spanning segment; it reads FLWGVLFALCFSCLLSQAWRV. Over 148 to 164 the chain is Cytoplasmic; it reads RRLVRQGTSPASWQLVS. The helical transmembrane segment at 165 to 185 threads the bilayer; sequence LALCLMLVQVIIATEWLVLTV. At 186–199 the chain is on the extracellular side; sequence LRDTKPACAYEPMD. Residues 200-220 traverse the membrane as a helical segment; it reads FVMALIYDMVLLAITLAQSLF. The Cytoplasmic segment spans residues 221-234; the sequence is TLCGKFKRWKVNGA. The helical transmembrane segment at 235–255 threads the bilayer; that stretch reads FILVTTFLSALIWVVWMTMYL. Residues 256–271 lie on the Extracellular side of the membrane; sequence FGNSLIKQGDAWSDPT. The helical transmembrane segment at 272-292 threads the bilayer; sequence LAITLAASGWVFVIFHAIPEI. Over 293 to 410 the chain is Cytoplasmic; the sequence is HYTLLPPLQE…PPSHTGRHHW (118 aa). Serine 355 is subject to Phosphoserine. A disordered region spans residues 356 to 381; that stretch reads LEQRSSSLGKKPSSLGNRPSAPFRSN. Residues 360–371 are compositionally biased toward low complexity; the sequence is SSSLGKKPSSLG.

The protein belongs to the G-protein coupled receptor 3 family.

The protein localises to the cell membrane. Its subcellular location is the cytoplasmic vesicle membrane. In terms of biological role, G-protein coupled receptor involved in the regulation of cell volume. This is G-protein coupled receptor family C group 5 member B (Gprc5b) from Mus musculus (Mouse).